The chain runs to 182 residues: Adenine phosphoribosyltransferase (182 aa).

Belongs to the purine/pyrimidine phosphoribosyltransferase family. As to quaternary structure, homodimer.

The protein resides in the cytoplasm. It catalyses the reaction AMP + diphosphate = 5-phospho-alpha-D-ribose 1-diphosphate + adenine. It functions in the pathway purine metabolism; AMP biosynthesis via salvage pathway; AMP from adenine: step 1/1. In terms of biological role, catalyzes a salvage reaction resulting in the formation of AMP, that is energically less costly than de novo synthesis. In Pseudomonas aeruginosa (strain LESB58), this protein is Adenine phosphoribosyltransferase.